The chain runs to 461 residues: L-serine dehydratase (461 aa).

Belongs to the iron-sulfur dependent L-serine dehydratase family. The cofactor is [4Fe-4S] cluster.

It carries out the reaction L-serine = pyruvate + NH4(+). Its pathway is carbohydrate biosynthesis; gluconeogenesis. The polypeptide is L-serine dehydratase (sdaA) (Mycobacterium bovis (strain ATCC BAA-935 / AF2122/97)).